The sequence spans 353 residues: Protein RecA (353 aa).

ATP is bound at residue 67–74 (GPESSGKT). Positions 330-353 (SNPNSTPDFSVDDSEGVAETNEDF) are disordered. The segment covering 339-353 (SVDDSEGVAETNEDF) has biased composition (acidic residues).

It belongs to the RecA family.

The protein resides in the cytoplasm. Its function is as follows. Can catalyze the hydrolysis of ATP in the presence of single-stranded DNA, the ATP-dependent uptake of single-stranded DNA by duplex DNA, and the ATP-dependent hybridization of homologous single-stranded DNAs. It interacts with LexA causing its activation and leading to its autocatalytic cleavage. This is Protein RecA from Escherichia coli O157:H7 (strain EC4115 / EHEC).